The sequence spans 293 residues: 4-hydroxybenzoate octaprenyltransferase (293 aa).

The next 8 helical transmembrane spans lie at 26 to 48 (PIGTLLLLYPTLWALFAAAGGMP), 98 to 118 (TEAKILFVLLLCIAFVLDLLL), 122 to 142 (TFLLSFVAVALAIIYPFMKRF), 145 to 165 (LPQVVLGMAFGWAIPMAYGAV), 167 to 187 (ESLPLECWLLFFANIFWTVAY), 218 to 238 (IIALLQFITLVLLVIFGWISQ), 241 to 261 (WGYFVVLGLSASLFSHQCWLT), and 272 to 292 (AFLNNHYFGLGVFFAILVGIY).

Belongs to the UbiA prenyltransferase family. Requires Mg(2+) as cofactor.

Its subcellular location is the cell inner membrane. The catalysed reaction is all-trans-octaprenyl diphosphate + 4-hydroxybenzoate = 4-hydroxy-3-(all-trans-octaprenyl)benzoate + diphosphate. Its pathway is cofactor biosynthesis; ubiquinone biosynthesis. In terms of biological role, catalyzes the prenylation of para-hydroxybenzoate (PHB) with an all-trans polyprenyl group. Mediates the second step in the final reaction sequence of ubiquinone-8 (UQ-8) biosynthesis, which is the condensation of the polyisoprenoid side chain with PHB, generating the first membrane-bound Q intermediate 3-octaprenyl-4-hydroxybenzoate. The sequence is that of 4-hydroxybenzoate octaprenyltransferase from Actinobacillus pleuropneumoniae serotype 3 (strain JL03).